The following is a 519-amino-acid chain: 2-isopropylmalate synthase (519 aa).

The region spanning 12-274 (VVIFDTTLRD…WCNVESTMLT (263 aa)) is the Pyruvate carboxyltransferase domain. Residues Asp21, His209, His211, and Asn245 each coordinate Mn(2+). The tract at residues 398–519 (KLSSLTVIAG…QRDVPAAAAS (122 aa)) is regulatory domain.

It belongs to the alpha-IPM synthase/homocitrate synthase family. LeuA type 1 subfamily. In terms of assembly, homodimer. The cofactor is Mn(2+).

The protein localises to the cytoplasm. The enzyme catalyses 3-methyl-2-oxobutanoate + acetyl-CoA + H2O = (2S)-2-isopropylmalate + CoA + H(+). It participates in amino-acid biosynthesis; L-leucine biosynthesis; L-leucine from 3-methyl-2-oxobutanoate: step 1/4. Functionally, catalyzes the condensation of the acetyl group of acetyl-CoA with 3-methyl-2-oxobutanoate (2-ketoisovalerate) to form 3-carboxy-3-hydroxy-4-methylpentanoate (2-isopropylmalate). The protein is 2-isopropylmalate synthase of Nitrobacter winogradskyi (strain ATCC 25391 / DSM 10237 / CIP 104748 / NCIMB 11846 / Nb-255).